The following is a 249-amino-acid chain: tRNA (guanine-N(1)-)-methyltransferase (249 aa).

Residues glycine 113 and 133–138 (IGDFVL) each bind S-adenosyl-L-methionine.

The protein belongs to the RNA methyltransferase TrmD family. As to quaternary structure, homodimer.

The protein resides in the cytoplasm. It catalyses the reaction guanosine(37) in tRNA + S-adenosyl-L-methionine = N(1)-methylguanosine(37) in tRNA + S-adenosyl-L-homocysteine + H(+). Specifically methylates guanosine-37 in various tRNAs. This is tRNA (guanine-N(1)-)-methyltransferase from Aliivibrio salmonicida (strain LFI1238) (Vibrio salmonicida (strain LFI1238)).